Here is a 146-residue protein sequence, read N- to C-terminus: Anti-sigma F factor (146 aa).

The protein belongs to the anti-sigma-factor family.

It catalyses the reaction L-seryl-[protein] + ATP = O-phospho-L-seryl-[protein] + ADP + H(+). The enzyme catalyses L-threonyl-[protein] + ATP = O-phospho-L-threonyl-[protein] + ADP + H(+). Its function is as follows. Binds to sigma F and blocks its ability to form an RNA polymerase holoenzyme (E-sigma F). Phosphorylates SpoIIAA on a serine residue. This phosphorylation may enable SpoIIAA to act as an anti-anti-sigma factor that counteracts SpoIIAB and thus releases sigma F from inhibition. The sequence is that of Anti-sigma F factor from Geobacillus kaustophilus (strain HTA426).